A 247-amino-acid chain; its full sequence is MSVTMREMLEAGCHFGHQTRFWNPKMAPFIFGHRNKIHIINLEKTLPMFQDALKYVRQLAANRGTVLFVGTKRQSREILAEEAGRAGMPYVDARWLGGMLTNFKTVKISIKRLKDMEAAKEAGALETMSKKEALMFEREMEKLEKSIGGIKDMGGIPDAIFVVDVGYHKIAVTEANKLGIPVIGVVDTNHSPEGIDYVIPGNDDSSKAVALYVRGVADAILEGRANAVQEVVEAARGDDEFVEVQEG.

The protein belongs to the universal ribosomal protein uS2 family.

The chain is Small ribosomal subunit protein uS2 from Cupriavidus metallidurans (strain ATCC 43123 / DSM 2839 / NBRC 102507 / CH34) (Ralstonia metallidurans).